Here is a 323-residue protein sequence, read N- to C-terminus: tRNA U34 carboxymethyltransferase (323 aa).

Carboxy-S-adenosyl-L-methionine is bound by residues Lys91, Trp105, Lys110, Gly130, Asp152–Thr154, Ile181–Glu182, Met196, Tyr200, and Arg315.

Belongs to the class I-like SAM-binding methyltransferase superfamily. CmoB family. As to quaternary structure, homotetramer.

It catalyses the reaction carboxy-S-adenosyl-L-methionine + 5-hydroxyuridine(34) in tRNA = 5-carboxymethoxyuridine(34) in tRNA + S-adenosyl-L-homocysteine + H(+). Its function is as follows. Catalyzes carboxymethyl transfer from carboxy-S-adenosyl-L-methionine (Cx-SAM) to 5-hydroxyuridine (ho5U) to form 5-carboxymethoxyuridine (cmo5U) at position 34 in tRNAs. The protein is tRNA U34 carboxymethyltransferase of Escherichia coli O7:K1 (strain IAI39 / ExPEC).